A 208-amino-acid chain; its full sequence is Interleukin-6 (208 aa).

A signal peptide spans 1–29 (MNSRFTSAFTPFAVSLGLLLVMTSAFPTP). A glycan (N-linked (GlcNAc...) asparagine) is linked at Asn-38. Cys-72 and Cys-78 are disulfide-bonded. Ser-81 is modified (phosphoserine). Cys-101 and Cys-111 form a disulfide bridge.

This sequence belongs to the IL-6 superfamily. As to quaternary structure, component of a hexamer of two molecules each of IL6, IL6R and IL6ST; first binds to IL6R to associate with the signaling subunit IL6ST. Interacts with IL6R (via the N-terminal ectodomain); this interaction may be affected by IL6R-binding with SORL1, hence decreasing IL6 cis signaling. Interacts with SORL1 (via the N-terminal ectodomain); this interaction leads to IL6 internalization and lysosomal degradation. May form a trimeric complex with the soluble SORL1 ectodomain and soluble IL6R receptor; this interaction might stabilize circulating IL6, hence promoting IL6 trans signaling.

Its subcellular location is the secreted. In terms of biological role, cytokine with a wide variety of biological functions in immunity, tissue regeneration, and metabolism. Binds to IL6R, then the complex associates to the signaling subunit IL6ST/gp130 to trigger the intracellular IL6-signaling pathway. The interaction with the membrane-bound IL6R and IL6ST stimulates 'classic signaling', whereas the binding of IL6 and soluble IL6R to IL6ST stimulates 'trans-signaling'. Alternatively, 'cluster signaling' occurs when membrane-bound IL6:IL6R complexes on transmitter cells activate IL6ST receptors on neighboring receiver cells. Functionally, IL6 is a potent inducer of the acute phase response. Rapid production of IL6 contributes to host defense during infection and tissue injury, but excessive IL6 synthesis is involved in disease pathology. In the innate immune response, is synthesized by myeloid cells, such as macrophages and dendritic cells, upon recognition of pathogens through toll-like receptors (TLRs) at the site of infection or tissue injury. In the adaptive immune response, is required for the differentiation of B cells into immunoglobulin-secreting cells. Plays a major role in the differentiation of CD4(+) T cell subsets. Essential factor for the development of T follicular helper (Tfh) cells that are required for the induction of germinal-center formation. Required to drive naive CD4(+) T cells to the Th17 lineage. Also required for proliferation of myeloma cells and the survival of plasmablast cells. Its function is as follows. Acts as an essential factor in bone homeostasis and on vessels directly or indirectly by induction of VEGF, resulting in increased angiogenesis activity and vascular permeability. Induces, through 'trans-signaling' and synergistically with IL1B and TNF, the production of VEGF. Involved in metabolic controls, is discharged into the bloodstream after muscle contraction increasing lipolysis and improving insulin resistance. 'Trans-signaling' in central nervous system also regulates energy and glucose homeostasis. Mediates, through GLP-1, crosstalk between insulin-sensitive tissues, intestinal L cells and pancreatic islets to adapt to changes in insulin demand. Also acts as a myokine. Plays a protective role during liver injury, being required for maintenance of tissue regeneration. Also has a pivotal role in iron metabolism by regulating HAMP/hepcidin expression upon inflammation or bacterial infection. Through activation of IL6ST-YAP-NOTCH pathway, induces inflammation-induced epithelial regeneration. This Bos taurus (Bovine) protein is Interleukin-6 (IL6).